Reading from the N-terminus, the 129-residue chain is Small ribosomal subunit protein uS11 (129 aa).

This sequence belongs to the universal ribosomal protein uS11 family. As to quaternary structure, part of the 30S ribosomal subunit. Interacts with proteins S7 and S18. Binds to IF-3.

In terms of biological role, located on the platform of the 30S subunit, it bridges several disparate RNA helices of the 16S rRNA. Forms part of the Shine-Dalgarno cleft in the 70S ribosome. The chain is Small ribosomal subunit protein uS11 from Bartonella quintana (strain Toulouse) (Rochalimaea quintana).